Reading from the N-terminus, the 417-residue chain is Serine hydroxymethyltransferase (417 aa).

(6S)-5,6,7,8-tetrahydrofolate contacts are provided by residues Leu120 and Gly124 to Leu126. Lys229 bears the N6-(pyridoxal phosphate)lysine mark. Residue Ser354–Phe356 coordinates (6S)-5,6,7,8-tetrahydrofolate.

The protein belongs to the SHMT family. As to quaternary structure, homodimer. Pyridoxal 5'-phosphate serves as cofactor.

It is found in the cytoplasm. The enzyme catalyses (6R)-5,10-methylene-5,6,7,8-tetrahydrofolate + glycine + H2O = (6S)-5,6,7,8-tetrahydrofolate + L-serine. Its pathway is one-carbon metabolism; tetrahydrofolate interconversion. The protein operates within amino-acid biosynthesis; glycine biosynthesis; glycine from L-serine: step 1/1. Its function is as follows. Catalyzes the reversible interconversion of serine and glycine with tetrahydrofolate (THF) serving as the one-carbon carrier. This reaction serves as the major source of one-carbon groups required for the biosynthesis of purines, thymidylate, methionine, and other important biomolecules. Also exhibits THF-independent aldolase activity toward beta-hydroxyamino acids, producing glycine and aldehydes, via a retro-aldol mechanism. In Acinetobacter radioresistens, this protein is Serine hydroxymethyltransferase.